Here is a 204-residue protein sequence, read N- to C-terminus: Ribosomal RNA small subunit methyltransferase G (204 aa).

Gly-73, Phe-78, and Arg-139 together coordinate S-adenosyl-L-methionine.

It belongs to the methyltransferase superfamily. RNA methyltransferase RsmG family.

It localises to the cytoplasm. It catalyses the reaction guanosine(527) in 16S rRNA + S-adenosyl-L-methionine = N(7)-methylguanosine(527) in 16S rRNA + S-adenosyl-L-homocysteine. In terms of biological role, specifically methylates the N7 position of guanine in position 527 of 16S rRNA. This Coxiella burnetii (strain Dugway 5J108-111) protein is Ribosomal RNA small subunit methyltransferase G.